The following is a 213-amino-acid chain: Nicolin-1 (213 aa).

In terms of assembly, part of the neuronal tubulin polyglutamylase complex which contains TPGS1, TPGS2, TTLL1, LRRC49 and NICN1. In terms of tissue distribution, high expression level is found in brain, testis, liver and kidney. Weak expression in spleen, leukocytes, small intestine and colon.

Its subcellular location is the nucleus. This Homo sapiens (Human) protein is Nicolin-1 (NICN1).